Here is an 897-residue protein sequence, read N- to C-terminus: Probable basic-leucine zipper transcription factor R (897 aa).

2 disordered regions span residues 38–88 and 128–198; these read DDNI…NIET and YQQR…NSNS. Low complexity predominate over residues 44 to 75; that stretch reads NNNNNNNNNNNNNNNNNNNNNNNNNNNNNNNN. A compositionally biased stretch (polar residues) spans 76–88; the sequence is IGSPQIMNENIET. The stretch at 94-137 forms a coiled coil; it reads QYLERLQSIQQQQHQCQTQIQQQLQNYQQQYEDQYQQRQQQYQD. A compositionally biased stretch (low complexity) spans 128–140; sequence YQQRQQQYQDQYQ. Over residues 141–157 the composition is skewed to polar residues; it reads KPYSSPPLNFNSIPPIT. The segment covering 158–198 has biased composition (low complexity); the sequence is NNNNNNNNNNNNNNNNNNSNSNSNSNSNSNSNSNSNSNSNS. 2 coiled-coil regions span residues 228–258 and 330–407; these read LQQQ…QQQQ and QQLQ…QQQQ. The disordered stretch occupies residues 461 to 516; it reads LQLPTPFYSPQQQQQQHTPISSFIPPPSLPSSPPSPPSPPSPPPQQQQQQQQQQQQ. Residues 484–505 are compositionally biased toward pro residues; sequence IPPPSLPSSPPSPPSPPSPPPQ. Low complexity predominate over residues 506 to 516; the sequence is QQQQQQQQQQQ. Residues 557–620 form the bZIP domain; it reads ESKESIKKYN…SIEMMRMEPE (64 aa). Residues 559–564 are basic motif; the sequence is KESIKK. The interval 569-576 is leucine-zipper; that stretch reads IASRNYRL.

This sequence belongs to the bZIP family.

The protein resides in the nucleus. Functionally, probable transcriptional regulator. The polypeptide is Probable basic-leucine zipper transcription factor R (bzpR) (Dictyostelium discoideum (Social amoeba)).